Reading from the N-terminus, the 421-residue chain is ATP-dependent RNA helicase RhlB (421 aa).

Positions 9–37 (QKFSDFALHAKVIEALENKGFHYCTPIQA) match the Q motif motif. Residues 40–219 (LPLTLAGRDV…FEQMNNAEYV (180 aa)) form the Helicase ATP-binding domain. Position 53 to 60 (53 to 60 (AQTGTGKT)) interacts with ATP. Residues 165 to 168 (DEAD) carry the DEAD box motif. The 146-residue stretch at 245-390 (RLLQTLIEEE…QSKYNPDALL (146 aa)) folds into the Helicase C-terminal domain. The segment at 386–421 (PDALLSELPPPKRLTRARSGNGPRRTGAPRNRRRPG) is disordered. The segment covering 405-414 (GNGPRRTGAP) has biased composition (low complexity).

Belongs to the DEAD box helicase family. RhlB subfamily. As to quaternary structure, component of the RNA degradosome, which is a multiprotein complex involved in RNA processing and mRNA degradation.

It localises to the cytoplasm. It catalyses the reaction ATP + H2O = ADP + phosphate + H(+). In terms of biological role, DEAD-box RNA helicase involved in RNA degradation. Has RNA-dependent ATPase activity and unwinds double-stranded RNA. The sequence is that of ATP-dependent RNA helicase RhlB from Enterobacter sp. (strain 638).